Consider the following 325-residue polypeptide: MAVENNTQRSYSIIPCFIFVELVIMAGTVLLAYYFECTDTFQVHIQGFFCQDGDLMKPYPGTEEESFISPLVLYCVLAATPTAIIFIGEISMYFIKSTRESLIAEEKMILTGDCCYLSPLLRRIVRFIGVFAFGLFATDIFVNAGQVVTGHLTPYFLTVCQPNYTSTDCRAHHQFINNGNICTGDLEVIEKARRSFPSKHAALSIYSALYATMYITSTIKTKSSRLAKPVLCLGDLCTAFLTGLNRVSEYRNHCSDVIAGFILGTAVALFLGMCVVHNFKGTQGSASKPKPEDPRGVPLMAFPRIESPLETLSAQNHSASMTEVT.

Residue Asn-5 is glycosylated (N-linked (GlcNAc...) asparagine). Transmembrane regions (helical) follow at residues 13 to 33 (IIPC…LLAY), 67 to 87 (FISP…IIFI), and 127 to 147 (FIGV…AGQV). Asn-163 carries an N-linked (GlcNAc...) asparagine glycan. The next 3 membrane-spanning stretches (helical) occupy residues 201-219 (AALS…TSTI), 226-244 (LAKP…LTGL), and 257-277 (VIAG…CVVH). Position 307 is a phosphoserine (Ser-307). A glycan (N-linked (GlcNAc...) asparagine) is linked at Asn-316.

This sequence belongs to the PA-phosphatase related phosphoesterase family. In terms of tissue distribution, highly expressed in the brain. Also found in the liver, kidney and testis. In the brain shows a strongest expression in the hippocampus and cerebellum.

The protein localises to the cell membrane. It localises to the cell projection. It is found in the neuron projection. In terms of biological role, may play a role in neurite outgrowth and neurogenesis. The chain is Phospholipid phosphatase-related protein type 1 from Rattus norvegicus (Rat).